We begin with the raw amino-acid sequence, 300 residues long: MTWKDRLPAVRGKLLRDEPLAPFTWFRVGGPADVIFLPEDEDDLAAFLKALPAEVPVTVLGVGSNTLVRDGGVDGVVIRLGKAFAKVEPRGEGRLYAGAAALDAVVAREAGKAGIAGLEFYRGVPGTIGGALVMNAGCYGAETKDVLVEAYALTRAGERLTLSNADLGYSYRKSARAAAEPLIFLGALFEGRPDDPAAIEARMAEITERREKTQPIREKTGGSTFKNPPGHSSWKLVDEAGWRGKLFGGAMFSPLHSNFLINTGEATAADLEGLGEAVRADVKAKFGVDLDWEIKRIGRP.

Residues 27 to 216 (RVGGPADVIF…TERREKTQPI (190 aa)) enclose the FAD-binding PCMH-type domain. Arginine 172 is an active-site residue. Serine 223 (proton donor) is an active-site residue. Glutamate 293 is a catalytic residue.

It belongs to the MurB family. Requires FAD as cofactor.

It is found in the cytoplasm. The catalysed reaction is UDP-N-acetyl-alpha-D-muramate + NADP(+) = UDP-N-acetyl-3-O-(1-carboxyvinyl)-alpha-D-glucosamine + NADPH + H(+). It participates in cell wall biogenesis; peptidoglycan biosynthesis. Functionally, cell wall formation. The chain is UDP-N-acetylenolpyruvoylglucosamine reductase from Phenylobacterium zucineum (strain HLK1).